The chain runs to 505 residues: Cytochrome P450 monooxygenase FGM1 (505 aa).

A signal peptide spans Met1–Ala23. 2 N-linked (GlcNAc...) asparagine glycosylation sites follow: Asn188 and Asn351. Cys450 is a heme binding site.

It belongs to the cytochrome P450 family. The cofactor is heme.

Its pathway is secondary metabolite biosynthesis. In terms of biological role, cytochrome P450 monooxygenase; part of the Fg3_54/C64 gene cluster that mediates the biosynthesis of the octapeptide fusaoctaxin A, a virulence factor that is required for cell-to-cell invasiveness of plant host. The 2 nonribosomal peptide synthetases NRPS9 and NRPS5 form an assembly line which likely utilizes GABA as a starter unit (loaded on the unique module M1 of NRPS9) and sequentially incorporates seven extender units composed of the residues L-Ala, L-allo-Ile, L-Ser, L-Val, L-Ser, L-Leu and L-Leu, respectively. During the process, each of the residues that are tethered on modules M3-M7 of NRPS5 containing an E domain can undergo an epimerization reaction to produce a D-configuration before the transpeptidation reaction occurs. The elongation of the peptidyl chain might be terminated by module M8-mediated L-Leu incorporation, followed by R domain-catalyzed 4 electron reduction to release the resulting octapeptide from the assembly line as an alcohol. Fusaoctaxin A is cleaved by the cluster specific ABC transporter FGM5 to the pentapeptide fusapentaxin A and the tripeptide fusatrixin A. The other enzymes from the cluster, FGM1, FGM2, FGM3 and FGM9 seem not to be involved in the biosynthesis of fusaoctaxin A and their functions have still to be determined. This is Cytochrome P450 monooxygenase FGM1 from Gibberella zeae (strain ATCC MYA-4620 / CBS 123657 / FGSC 9075 / NRRL 31084 / PH-1) (Wheat head blight fungus).